The sequence spans 354 residues: Ornithine transcarbamylase, mitochondrial (354 aa).

Residues 1–32 (MLSNLRILLNNAALRKGHTSVVRHFWCGKPVQ) constitute a mitochondrion transit peptide. Lys-70 carries the N6-acetyllysine; alternate modification. An N6-succinyllysine; alternate modification is found at Lys-70. At Lys-80 the chain carries N6-succinyllysine. Lys-88 is modified (N6-acetyllysine; alternate). Lys-88 is modified (N6-succinyllysine; alternate). 90-94 (STRTR) provides a ligand contact to carbamoyl phosphate. The residue at position 133 (Ser-133) is a Phosphoserine. Position 141 (Arg-141) interacts with carbamoyl phosphate. Residue Arg-141 coordinates L-ornithine. Lys-144 carries the N6-acetyllysine; alternate modification. Lys-144 is modified (N6-succinyllysine; alternate). Residue His-168 participates in carbamoyl phosphate binding. L-ornithine is bound at residue Asn-199. Lys-221, Lys-231, and Lys-238 each carry N6-acetyllysine; alternate. N6-succinyllysine; alternate is present on residues Lys-221, Lys-231, and Lys-238. Lys-243 is modified (N6-acetyllysine). 263–267 (DTWIS) contributes to the L-ornithine binding site. N6-succinyllysine is present on residues Lys-274 and Lys-289. An N6-acetyllysine; alternate modification is found at Lys-292. An N6-succinyllysine; alternate modification is found at Lys-292. Residue 302 to 305 (HCLP) coordinates L-ornithine. Residue Cys-303 is part of the active site. Lys-307 carries the post-translational modification N6-acetyllysine; alternate. Lys-307 bears the N6-succinyllysine; alternate mark. A carbamoyl phosphate-binding site is contributed by Arg-330. Arg-330 contributes to the L-ornithine binding site.

This sequence belongs to the aspartate/ornithine carbamoyltransferase superfamily. OTCase family. Homotrimer. In terms of processing, acetylation at Lys-88 negatively regulates ornithine carbamoyltransferase activity in response to nutrient signals.

Its subcellular location is the mitochondrion matrix. It catalyses the reaction carbamoyl phosphate + L-ornithine = L-citrulline + phosphate + H(+). It participates in nitrogen metabolism; urea cycle; L-citrulline from L-ornithine and carbamoyl phosphate: step 1/1. Negatively regulated by lysine acetylation. Its function is as follows. Catalyzes the second step of the urea cycle, the condensation of carbamoyl phosphate with L-ornithine to form L-citrulline. The urea cycle ensures the detoxification of ammonia by converting it to urea for excretion. This Mus musculus (Mouse) protein is Ornithine transcarbamylase, mitochondrial.